Consider the following 218-residue polypeptide: Large ribosomal subunit protein uL1 (218 aa).

Belongs to the universal ribosomal protein uL1 family. In terms of assembly, part of the 50S ribosomal subunit.

In terms of biological role, probably involved in E site tRNA release. Binds directly to 23S rRNA. Functionally, protein L1 is also a translational repressor protein, it controls the translation of its operon by binding to its mRNA. This is Large ribosomal subunit protein uL1 from Saccharolobus solfataricus (strain ATCC 35092 / DSM 1617 / JCM 11322 / P2) (Sulfolobus solfataricus).